The chain runs to 365 residues: MPEITVRAKSKTYPVYINEFALEDIREKWTKSLAKFSHVFVLTDGHVAELHKAKLDAVLADLPVVTYYVAPNGEEAKTFRVYEDVMTKMIETGLDRKAVLIAFGGGVIGDLGGFVAATYMRGIPFYQVPTTVLAHDSAVGGKVAINHPLGKNMIGNFYQPEAVIYDTQFFATLPERELRSGFAEMIKHALISDLTLLRALMDTFTEPKDFYTKDLTPFLQRGIEIKANIVAQDETEQGVRAYLNFGHTFGHALEAYGNFGKWLHGEAITYGMIYALTMSETIYGLDFDLAEFKTWLEQLGYDTTFDASVPFSKILENMRHDKKTTFNEISMVLLEEIGKPVIFKADDDLIFETYKRVMRKGGNVI.

NAD(+) is bound by residues 106–110, 130–131, lysine 142, lysine 151, and 169–172; these read GVIGD, TT, and FFAT. The Zn(2+) site is built by glutamate 184, histidine 247, and histidine 264.

The protein belongs to the sugar phosphate cyclases superfamily. Dehydroquinate synthase family. NAD(+) is required as a cofactor. Co(2+) serves as cofactor. It depends on Zn(2+) as a cofactor.

Its subcellular location is the cytoplasm. The catalysed reaction is 7-phospho-2-dehydro-3-deoxy-D-arabino-heptonate = 3-dehydroquinate + phosphate. Its pathway is metabolic intermediate biosynthesis; chorismate biosynthesis; chorismate from D-erythrose 4-phosphate and phosphoenolpyruvate: step 2/7. Functionally, catalyzes the conversion of 3-deoxy-D-arabino-heptulosonate 7-phosphate (DAHP) to dehydroquinate (DHQ). The chain is 3-dehydroquinate synthase from Listeria monocytogenes serovar 1/2a (strain ATCC BAA-679 / EGD-e).